A 64-amino-acid chain; its full sequence is Large ribosomal subunit protein bL35 (64 aa).

Residues 1 to 42 show a composition bias toward basic residues; that stretch reads MPKAKTHSGASKRFRRTGTGKIVRQKANRRHLLEHKSSKRTR. The tract at residues 1–64 is disordered; that stretch reads MPKAKTHSGA…TKRVKSLLNG (64 aa).

The protein belongs to the bacterial ribosomal protein bL35 family.

This is Large ribosomal subunit protein bL35 from Mycobacterium ulcerans (strain Agy99).